A 346-amino-acid chain; its full sequence is Cyclic GMP-AMP synthase-like protein (346 aa).

ATP-binding positions include Ser58 and 70-72 (EFD). Residues Glu70, Asp72, and Asp165 each coordinate Mg(2+). Residues Asp165 and 212-219 (MVCAPHWE) contribute to the GTP site. Residues 216–219 (PHWE), Lys237, and 252–256 (SYMLK) contribute to the ATP site.

The protein belongs to the mab-21 family. It depends on Mg(2+) as a cofactor. Requires Mn(2+) as cofactor.

With respect to regulation, activated in response of some unknown stimulus. Not activated in response to L-monocytogenes infection. Probable nucleotidyltransferase that catalyzes the formation of cyclic dinucleotide second messenger in response to some unknown stimulus. Does not catalyze the formation of cyclic GMP-AMP from ATP and GTP. This is Cyclic GMP-AMP synthase-like protein from Drosophila melanogaster (Fruit fly).